Consider the following 36-residue polypeptide: ERGLPEGAECDGNESDCKCAGAWIKCRCPPMWHING.

This sequence belongs to the neurotoxin 04 (omega-agtx) family. 01 (type I omega-agtx) subfamily. In terms of tissue distribution, expressed by the venom gland.

It localises to the secreted. Functionally, omega-agatoxin are antagonist of voltage-gated calcium channels. They block insect neuromuscular transmission presynaptically. This toxin is a blocker of L-type calcium channels (Cav/CACNA1). In Agelenopsis aperta (North American funnel-web spider), this protein is Omega-agatoxin-Aa1b.